Reading from the N-terminus, the 361-residue chain is 3-dehydroquinate synthase (361 aa).

The protein belongs to the archaeal-type DHQ synthase family.

It carries out the reaction 2-amino-2,3,7-trideoxy-D-lyxo-hept-6-ulosonate + NAD(+) + H2O = 3-dehydroquinate + NH4(+) + NADH + H(+). Catalyzes the oxidative deamination and cyclization of 2-amino-3,7-dideoxy-D-threo-hept-6-ulosonic acid (ADH) to yield 3-dehydroquinate (DHQ), which is fed into the canonical shikimic pathway of aromatic amino acid biosynthesis. This chain is 3-dehydroquinate synthase, found in Methanococcus maripaludis (strain C7 / ATCC BAA-1331).